The primary structure comprises 239 residues: Endolytic peptidoglycan transglycosylase RlpA (239 aa).

A signal peptide spans 1 to 25 (MTLTRKTLFLLTAAFGTHSLQTASA). The SPOR domain maps to 160-239 (VAENKDIFID…GMVRAVLTAG (80 aa)).

It belongs to the RlpA family.

Lytic transglycosylase with a strong preference for naked glycan strands that lack stem peptides. The polypeptide is Endolytic peptidoglycan transglycosylase RlpA (Neisseria meningitidis serogroup B (strain ATCC BAA-335 / MC58)).